The sequence spans 100 residues: Large ribosomal subunit protein uL23 (100 aa).

It belongs to the universal ribosomal protein uL23 family. In terms of assembly, part of the 50S ribosomal subunit. Contacts protein L29, and trigger factor when it is bound to the ribosome.

In terms of biological role, one of the early assembly proteins it binds 23S rRNA. One of the proteins that surrounds the polypeptide exit tunnel on the outside of the ribosome. Forms the main docking site for trigger factor binding to the ribosome. This chain is Large ribosomal subunit protein uL23, found in Xylella fastidiosa (strain 9a5c).